We begin with the raw amino-acid sequence, 429 residues long: MSSIIDIFAREILDSRGNPTVEVEVELDSGAVGRAAVPSGASTGAFEAVELRDGDKSRYLGKGVLKAVQNVNDIIAPELIGMEAQDQVAIDKAMIELDGTPNKSKLGANAILGVSLAVAKAAAEECGLPLYQYIGGVNAKTLPVPMMNILNGGKHADNNVDIQEFMIMPVGAPNFREALRMCSEVYHNLKNVLHSKGLSTTVGDEGGFAPNLTSNEEAIQVILEAIEKAGYVPGEDIVLALDPASTELYKEDGKYHFEGEGIVRTPEEMVDFWEQLVNKYPIVSIEDGLAEEDWNGWKLLTERLGKKIQLVGDDLFVTNTQRLSKGISMGVANSILIKLNQIGTLTETLDAIEMAKRAGYTAVVSHRSGETEDSTIADLVVGVNAGQIKTGAPARTDRVVKYNQLLRIEEALGSTAQYLGKNAFYNIKK.

Gln-163 provides a ligand contact to (2R)-2-phosphoglycerate. Glu-205 acts as the Proton donor in catalysis. Residues Asp-242, Glu-286, and Asp-313 each contribute to the Mg(2+) site. (2R)-2-phosphoglycerate is bound by residues Lys-338, Arg-367, Ser-368, and Lys-389. Lys-338 functions as the Proton acceptor in the catalytic mechanism.

This sequence belongs to the enolase family. Mg(2+) serves as cofactor.

The protein resides in the cytoplasm. It localises to the secreted. It is found in the cell surface. The catalysed reaction is (2R)-2-phosphoglycerate = phosphoenolpyruvate + H2O. It participates in carbohydrate degradation; glycolysis; pyruvate from D-glyceraldehyde 3-phosphate: step 4/5. Its function is as follows. Catalyzes the reversible conversion of 2-phosphoglycerate (2-PG) into phosphoenolpyruvate (PEP). It is essential for the degradation of carbohydrates via glycolysis. The polypeptide is Enolase (Thermoanaerobacter pseudethanolicus (strain ATCC 33223 / 39E) (Clostridium thermohydrosulfuricum)).